Reading from the N-terminus, the 538-residue chain is Bifunctional purine biosynthesis protein PurH (538 aa).

Positions 8-158 (IPAPDLVPVR…KNHAYVAIVT (151 aa)) constitute an MGS-like domain.

This sequence belongs to the PurH family.

The catalysed reaction is (6R)-10-formyltetrahydrofolate + 5-amino-1-(5-phospho-beta-D-ribosyl)imidazole-4-carboxamide = 5-formamido-1-(5-phospho-D-ribosyl)imidazole-4-carboxamide + (6S)-5,6,7,8-tetrahydrofolate. The enzyme catalyses IMP + H2O = 5-formamido-1-(5-phospho-D-ribosyl)imidazole-4-carboxamide. It functions in the pathway purine metabolism; IMP biosynthesis via de novo pathway; 5-formamido-1-(5-phospho-D-ribosyl)imidazole-4-carboxamide from 5-amino-1-(5-phospho-D-ribosyl)imidazole-4-carboxamide (10-formyl THF route): step 1/1. The protein operates within purine metabolism; IMP biosynthesis via de novo pathway; IMP from 5-formamido-1-(5-phospho-D-ribosyl)imidazole-4-carboxamide: step 1/1. This Mesorhizobium japonicum (strain LMG 29417 / CECT 9101 / MAFF 303099) (Mesorhizobium loti (strain MAFF 303099)) protein is Bifunctional purine biosynthesis protein PurH.